Here is a 71-residue protein sequence, read N- to C-terminus: Large ribosomal subunit protein bL31 (71 aa).

Zn(2+) contacts are provided by C16, C18, C36, and C39.

This sequence belongs to the bacterial ribosomal protein bL31 family. Type A subfamily. In terms of assembly, part of the 50S ribosomal subunit. Zn(2+) is required as a cofactor.

Functionally, binds the 23S rRNA. In Pseudothermotoga lettingae (strain ATCC BAA-301 / DSM 14385 / NBRC 107922 / TMO) (Thermotoga lettingae), this protein is Large ribosomal subunit protein bL31.